Here is a 723-residue protein sequence, read N- to C-terminus: Polyribonucleotide nucleotidyltransferase (723 aa).

The Mg(2+) site is built by Asp488 and Asp494. Residues 555–614 enclose the KH domain; it reads PRMITMKIHPDKIREVIGKGGSTIQALTKETGTTIDIQEDGTITIASTSTEGMAEAKRRI. In terms of domain architecture, S1 motif spans 624–692; that stretch reads GKIYAGTVLK…EKGRLRLSLK (69 aa). Residues 701–723 form a disordered region; that stretch reads SISPINAGESAAPAAPAGGSEQQ. A compositionally biased stretch (low complexity) spans 707–723; the sequence is AGESAAPAAPAGGSEQQ.

Belongs to the polyribonucleotide nucleotidyltransferase family. It depends on Mg(2+) as a cofactor.

It is found in the cytoplasm. The enzyme catalyses RNA(n+1) + phosphate = RNA(n) + a ribonucleoside 5'-diphosphate. Involved in mRNA degradation. Catalyzes the phosphorolysis of single-stranded polyribonucleotides processively in the 3'- to 5'-direction. This Cupriavidus taiwanensis (strain DSM 17343 / BCRC 17206 / CCUG 44338 / CIP 107171 / LMG 19424 / R1) (Ralstonia taiwanensis (strain LMG 19424)) protein is Polyribonucleotide nucleotidyltransferase.